We begin with the raw amino-acid sequence, 510 residues long: 2,3-bisphosphoglycerate-independent phosphoglycerate mutase (510 aa).

Residues aspartate 13 and serine 63 each coordinate Mn(2+). The Phosphoserine intermediate role is filled by serine 63. Substrate-binding positions include histidine 124, 154–155 (RD), arginine 186, arginine 192, 262–265 (RADR), and lysine 334. Mn(2+)-binding residues include aspartate 401, histidine 405, aspartate 442, histidine 443, and histidine 461.

It belongs to the BPG-independent phosphoglycerate mutase family. Monomer. It depends on Mn(2+) as a cofactor.

It catalyses the reaction (2R)-2-phosphoglycerate = (2R)-3-phosphoglycerate. It functions in the pathway carbohydrate degradation; glycolysis; pyruvate from D-glyceraldehyde 3-phosphate: step 3/5. In terms of biological role, catalyzes the interconversion of 2-phosphoglycerate and 3-phosphoglycerate. The chain is 2,3-bisphosphoglycerate-independent phosphoglycerate mutase from Vibrio campbellii (strain ATCC BAA-1116).